A 420-amino-acid polypeptide reads, in one-letter code: UPF0053 protein HI_0107 (420 aa).

One can recognise a CNNM transmembrane domain in the interval 2–190; it reads DSIPLSTLFI…GEATPNEQHP (189 aa). 4 helical membrane-spanning segments follow: residues 3 to 23, 65 to 85, 92 to 112, and 126 to 146; these read SIPL…SAYF, FILI…TVIG, AGVA…SEIF, and FFSS…VWLM. CBS domains follow at residues 208-268 and 273-333; these read MVPR…KNEF and LIRA…FTTS.

Belongs to the UPF0053 family.

The protein localises to the cell membrane. The polypeptide is UPF0053 protein HI_0107 (Haemophilus influenzae (strain ATCC 51907 / DSM 11121 / KW20 / Rd)).